The following is a 193-amino-acid chain: Crossover junction endodeoxyribonuclease RuvC (193 aa).

Catalysis depends on residues aspartate 7, glutamate 68, and aspartate 141. Aspartate 7, glutamate 68, and aspartate 141 together coordinate Mg(2+).

Belongs to the RuvC family. In terms of assembly, homodimer which binds Holliday junction (HJ) DNA. The HJ becomes 2-fold symmetrical on binding to RuvC with unstacked arms; it has a different conformation from HJ DNA in complex with RuvA. In the full resolvosome a probable DNA-RuvA(4)-RuvB(12)-RuvC(2) complex forms which resolves the HJ. Requires Mg(2+) as cofactor.

Its subcellular location is the cytoplasm. It catalyses the reaction Endonucleolytic cleavage at a junction such as a reciprocal single-stranded crossover between two homologous DNA duplexes (Holliday junction).. The RuvA-RuvB-RuvC complex processes Holliday junction (HJ) DNA during genetic recombination and DNA repair. Endonuclease that resolves HJ intermediates. Cleaves cruciform DNA by making single-stranded nicks across the HJ at symmetrical positions within the homologous arms, yielding a 5'-phosphate and a 3'-hydroxyl group; requires a central core of homology in the junction. The consensus cleavage sequence is 5'-(A/T)TT(C/G)-3'. Cleavage occurs on the 3'-side of the TT dinucleotide at the point of strand exchange. HJ branch migration catalyzed by RuvA-RuvB allows RuvC to scan DNA until it finds its consensus sequence, where it cleaves and resolves the cruciform DNA. In Renibacterium salmoninarum (strain ATCC 33209 / DSM 20767 / JCM 11484 / NBRC 15589 / NCIMB 2235), this protein is Crossover junction endodeoxyribonuclease RuvC.